A 164-amino-acid chain; its full sequence is DNA-directed RNA polymerase 19 kDa subunit (164 aa).

The segment covering 1–35 (MADTDDIIDYESDDLTEYEDDDEEEEDGESLETSD) has biased composition (acidic residues). The segment at 1-39 (MADTDDIIDYESDDLTEYEDDDEEEEDGESLETSDIDPK) is disordered.

It belongs to the poxviridae DNA-directed RNA polymerase 19 kDa subunit family. As to quaternary structure, the DNA-dependent RNA polymerase used for intermediate and late genes expression consists of eight subunits Rpo30/OPG66, Rpo7/OPG90, Rpo22/OPG103, Rpo147/OPG105, Rpo18/OPG119, Rpo19/OPG131, Rpo132/OPG151 and Rpo35/OPG156. The same holoenzyme, with the addition of the transcription-specificity factor OPG109, is used for early gene expression.

It is found in the virion. The catalysed reaction is RNA(n) + a ribonucleoside 5'-triphosphate = RNA(n+1) + diphosphate. Part of the DNA-dependent RNA polymerase which catalyzes the transcription of viral DNA into RNA using the four ribonucleoside triphosphates as substrates. Responsible for the transcription of early, intermediate and late genes. DNA-dependent RNA polymerase associates with the early transcription factor (ETF), itself composed of OPG118 and OPG133, thereby allowing the early genes transcription. Late transcription, and probably also intermediate transcription, require newly synthesized RNA polymerase. This Variola virus (isolate Human/India/Ind3/1967) (VARV) protein is DNA-directed RNA polymerase 19 kDa subunit (OPG131).